Reading from the N-terminus, the 114-residue chain is Nucleoid-associated protein slr1847 (114 aa).

The protein belongs to the YbaB/EbfC family. In terms of assembly, homodimer.

The protein localises to the cytoplasm. It is found in the nucleoid. In terms of biological role, binds to DNA and alters its conformation. May be involved in regulation of gene expression, nucleoid organization and DNA protection. The sequence is that of Nucleoid-associated protein slr1847 from Synechocystis sp. (strain ATCC 27184 / PCC 6803 / Kazusa).